Here is a 371-residue protein sequence, read N- to C-terminus: Probable G protein-coupled receptor 85 (371 aa).

Over 1-26 (MANYSHAGDHNILQNVSPLATFLKLT) the chain is Extracellular. An N-linked (GlcNAc...) asparagine glycan is attached at Asn-3. The helical transmembrane segment at 27–47 (SLGFIIGVGVVGNLLISILLV) threads the bilayer. The Cytoplasmic segment spans residues 48–58 (KDKSLHRAPYY). Residues 59–79 (FLLDLCASDILRSAICFPFVF) traverse the membrane as a helical segment. Residues 80 to 96 (TSVKNGSAWTYGTLTCK) lie on the Extracellular side of the membrane. The N-linked (GlcNAc...) asparagine glycan is linked to Asn-84. Residues Cys-95 and Cys-173 are joined by a disulfide bond. A helical membrane pass occupies residues 97–117 (VIAFLGVLSCFHTAFMLFCVS). At 118–138 (VTRYLAIAHHRFYTKRLTFWT) the chain is on the cytoplasmic side. Residues 139-159 (CLAVICMVWTLSVAMAFPPVL) traverse the membrane as a helical segment. Over 160-189 (DVGTYSFIREEDQCTFQHRSFRANDSLGFM) the chain is Extracellular. Asn-183 is a glycosylation site (N-linked (GlcNAc...) asparagine). Residues 190–210 (LLLALILLATQLVYLKLIFFV) form a helical membrane-spanning segment. At 211-287 (HDRRKMKPVQ…FKTEKRISRM (77 aa)) the chain is on the cytoplasmic side. Residues 288–308 (FYIITFFFLSLWGPYLVACYW) form a helical membrane-spanning segment. At 309–321 (RVFARGPVIPGGY) the chain is on the extracellular side. The helical transmembrane segment at 322–342 (LTAAVWMSFAQAGVNPFICIF) threads the bilayer. Topologically, residues 343–371 (SNRELRRCFSTTLLYCRKSRLPREPYCVI) are cytoplasmic.

This sequence belongs to the G-protein coupled receptor 1 family.

It is found in the cell membrane. Orphan receptor. The polypeptide is Probable G protein-coupled receptor 85 (gpr85) (Danio rerio (Zebrafish)).